The following is a 213-amino-acid chain: Probable nicotinate-nucleotide adenylyltransferase (213 aa).

It belongs to the NadD family.

The catalysed reaction is nicotinate beta-D-ribonucleotide + ATP + H(+) = deamido-NAD(+) + diphosphate. The protein operates within cofactor biosynthesis; NAD(+) biosynthesis; deamido-NAD(+) from nicotinate D-ribonucleotide: step 1/1. Functionally, catalyzes the reversible adenylation of nicotinate mononucleotide (NaMN) to nicotinic acid adenine dinucleotide (NaAD). This is Probable nicotinate-nucleotide adenylyltransferase from Trichlorobacter lovleyi (strain ATCC BAA-1151 / DSM 17278 / SZ) (Geobacter lovleyi).